A 627-amino-acid polypeptide reads, in one-letter code: uncharacterized protein (627 aa).

At 1 to 32 (MVDDSNYLTPHETALAVVATAMKKARLQLDTL) the chain is on the extracellular side. The chain crosses the membrane as a helical span at residues 33 to 53 (LINSILGGVLFSSGSFLLVAV). Residues 54–66 (YSEDPDIVARNPG) lie on the Cytoplasmic side of the membrane. The helical transmembrane segment at 67–87 (IVNLITGVNFAMGLFYVVMMG) threads the bilayer. Residues 88–113 (ADLFNSNILFFSVGVLRKAVTIYDLM) are Extracellular-facing. Residues 114-134 (ISWVVSWLGNIAGSLFVSYLF) traverse the membrane as a helical segment. At 135–165 (GHLSGISSQKLWIIGSRQIIEQKVSYSFVQT) the chain is on the cytoplasmic side. A helical membrane pass occupies residues 166–186 (FLKGIACNFFVCLAIYLQLMA). At 187-192 (KPIHVK) the chain is on the extracellular side. A helical transmembrane segment spans residues 193–213 (FILMSFPIIDFIGIGFTHVVG). Residues 214–218 (DMSAS) lie on the Cytoplasmic side of the membrane. A helical membrane pass occupies residues 219–239 (FIAMLNGANVSVGKYIWKLLI). The Extracellular segment spans residues 240–245 (PASLGN). The chain crosses the membrane as a helical span at residues 246 to 266 (IVGGLFFSAVVPFYLHLVVVE). At 267–627 (RDRKRLSLPE…FYNRHTSPQL (361 aa)) the chain is on the cytoplasmic side. T305 bears the Phosphothreonine mark. The segment at 512–537 (PPILPRTTQDTFPHNAPASSPAYTDD) is disordered. A compositionally biased stretch (polar residues) spans 517-533 (RTTQDTFPHNAPASSPA). Position 546 is a phosphoserine (S546). T588 bears the Phosphothreonine mark. Positions 605 to 614 (STTRRQKITE) are enriched in basic and acidic residues. A disordered region spans residues 605 to 627 (STTRRQKITEPKNFYNRHTSPQL).

The protein belongs to the FNT transporter (TC 1.A.16) family.

It is found in the membrane. This is an uncharacterized protein from Saccharomyces cerevisiae (strain ATCC 204508 / S288c) (Baker's yeast).